The primary structure comprises 204 residues: Carbon disulfide hydrolase (204 aa).

The Zn(2+) site is built by cysteine 35, histidine 88, and cysteine 91.

It belongs to the beta-class carbonic anhydrase family. In terms of assembly, forms a hexadecameric catenane homooligomer, through interactions of two interlocked octameric rings. Zn(2+) is required as a cofactor.

It carries out the reaction carbon disulfide + 2 H2O = 2 hydrogen sulfide + CO2 + 2 H(+). It participates in sulfur metabolism; hydrogen sulfide biosynthesis. Catalyzes the conversion of carbon disulfide into hydrogen sulfide and carbon dioxide, with carbonyl sulfide as an intermediate. Likely plays a key role in sulfur metabolism in S.solfataricus. Does not show carbonic anhydrase activity (hydration of CO(2) to carbonate). This chain is Carbon disulfide hydrolase, found in Saccharolobus solfataricus (strain ATCC 35092 / DSM 1617 / JCM 11322 / P2) (Sulfolobus solfataricus).